The chain runs to 253 residues: Triosephosphate isomerase (253 aa).

Asn9–Lys11 provides a ligand contact to substrate. His94 serves as the catalytic Electrophile. Glu163 functions as the Proton acceptor in the catalytic mechanism. Residues Gly169, Ser209, and Gly230–Gly231 contribute to the substrate site.

It belongs to the triosephosphate isomerase family. As to quaternary structure, homodimer.

It is found in the cytoplasm. It carries out the reaction D-glyceraldehyde 3-phosphate = dihydroxyacetone phosphate. It functions in the pathway carbohydrate biosynthesis; gluconeogenesis. The protein operates within carbohydrate degradation; glycolysis; D-glyceraldehyde 3-phosphate from glycerone phosphate: step 1/1. In terms of biological role, involved in the gluconeogenesis. Catalyzes stereospecifically the conversion of dihydroxyacetone phosphate (DHAP) to D-glyceraldehyde-3-phosphate (G3P). The sequence is that of Triosephosphate isomerase from Dehalococcoides mccartyi (strain CBDB1).